A 95-amino-acid chain; its full sequence is Small ribosomal subunit protein bS6 (95 aa).

It belongs to the bacterial ribosomal protein bS6 family.

Functionally, binds together with bS18 to 16S ribosomal RNA. The chain is Small ribosomal subunit protein bS6 from Corynebacterium kroppenstedtii (strain DSM 44385 / JCM 11950 / CIP 105744 / CCUG 35717).